The sequence spans 601 residues: Elongation factor 4 (601 aa).

Residues 6–188 (KNIRNFSIIA…QIIKKIPAPD (183 aa)) enclose the tr-type G domain. GTP is bound by residues 18-23 (DHGKST) and 135-138 (NKID).

It belongs to the TRAFAC class translation factor GTPase superfamily. Classic translation factor GTPase family. LepA subfamily.

The protein localises to the cell membrane. It carries out the reaction GTP + H2O = GDP + phosphate + H(+). In terms of biological role, required for accurate and efficient protein synthesis under certain stress conditions. May act as a fidelity factor of the translation reaction, by catalyzing a one-codon backward translocation of tRNAs on improperly translocated ribosomes. Back-translocation proceeds from a post-translocation (POST) complex to a pre-translocation (PRE) complex, thus giving elongation factor G a second chance to translocate the tRNAs correctly. Binds to ribosomes in a GTP-dependent manner. This Buchnera aphidicola subsp. Schizaphis graminum (strain Sg) protein is Elongation factor 4.